The chain runs to 202 residues: Small ribosomal subunit protein uS4c (202 aa).

Positions 90 to 151 constitute an S4 RNA-binding domain; the sequence is MRLDNTIFRL…KQKSRFIITK (62 aa).

Belongs to the universal ribosomal protein uS4 family. In terms of assembly, part of the 30S ribosomal subunit. Contacts protein S5. The interaction surface between S4 and S5 is involved in control of translational fidelity.

It localises to the plastid. The protein resides in the chloroplast. One of the primary rRNA binding proteins, it binds directly to 16S rRNA where it nucleates assembly of the body of the 30S subunit. In terms of biological role, with S5 and S12 plays an important role in translational accuracy. In Plagiochila adianthoides (Liverwort), this protein is Small ribosomal subunit protein uS4c (rps4).